A 78-amino-acid chain; its full sequence is Acyl carrier protein (78 aa).

A Carrier domain is found at 2 to 77 (DDLFKKIQQL…DAYEFIKSQQ (76 aa)). The residue at position 37 (S37) is an O-(pantetheine 4'-phosphoryl)serine.

Belongs to the acyl carrier protein (ACP) family. In terms of processing, 4'-phosphopantetheine is transferred from CoA to a specific serine of apo-ACP by AcpS. This modification is essential for activity because fatty acids are bound in thioester linkage to the sulfhydryl of the prosthetic group.

The protein localises to the cytoplasm. It participates in lipid metabolism; fatty acid biosynthesis. Functionally, carrier of the growing fatty acid chain in fatty acid biosynthesis. In Treponema denticola (strain ATCC 35405 / DSM 14222 / CIP 103919 / JCM 8153 / KCTC 15104), this protein is Acyl carrier protein.